The chain runs to 3898 residues: Genome polyprotein (3898 aa).

In terms of domain architecture, Peptidase C53 spans methionine 1 to cysteine 168. Disordered regions lie at residues leucine 47–glycine 72, lysine 172–aspartate 209, and lysine 223–glutamate 245. Catalysis depends on for N-terminal protease activity residues histidine 49 and cysteine 69. Over residues lysine 172–proline 207 the composition is skewed to basic and acidic residues. 4 N-linked (GlcNAc...) asparagine; by host glycosylation sites follow: asparagine 272, asparagine 281, asparagine 296, and asparagine 335. 2 disulfides stabilise this stretch: cysteine 308-cysteine 352 and cysteine 338-cysteine 339. Catalysis depends on for E(rns) glycoprotein RNase activity residues histidine 344, glutamate 345, lysine 348, and histidine 349. N-linked (GlcNAc...) asparagine; by host glycans are attached at residues asparagine 365 and asparagine 370. 2 cysteine pairs are disulfide-bonded: cysteine 380–cysteine 425 and cysteine 384–cysteine 408. N-linked (GlcNAc...) asparagine; by host glycans are attached at residues asparagine 413, asparagine 487, and asparagine 597. Residues alanine 498–leucine 666 lie on the Lumenal side of the membrane. Residues valine 667–isoleucine 687 traverse the membrane as a helical segment. The Lumenal portion of the chain corresponds to threonine 688–serine 1035. 2 disulfide bridges follow: cysteine 696–cysteine 740 and cysteine 751–cysteine 798. 4 N-linked (GlcNAc...) asparagine; by host glycosylation sites follow: asparagine 809, asparagine 878, asparagine 922, and asparagine 990. The next 8 helical transmembrane spans lie at isoleucine 1036–tyrosine 1056, asparagine 1079–leucine 1099, valine 1108–leucine 1128, leucine 1144–alanine 1164, proline 1189–threonine 1209, tryptophan 1217–leucine 1237, isoleucine 1247–threonine 1267, and valine 1281–leucine 1301. N-linked (GlcNAc...) asparagine; by host glycosylation occurs at asparagine 1357. A helical membrane pass occupies residues methionine 1360–isoleucine 1380. N-linked (GlcNAc...) asparagine; by host glycosylation occurs at asparagine 1419. A Peptidase C74 domain is found at arginine 1441–arginine 1589. The active-site For cysteine protease NS2 activity is the histidine 1447. The N-linked (GlcNAc...) asparagine; by host glycan is linked to asparagine 1451. Residues glutamate 1461 and cysteine 1512 each act as for cysteine protease NS2 activity in the active site. Residues methionine 1568–leucine 1588 form a helical membrane-spanning segment. Residues glycine 1590–arginine 1763 enclose the Peptidase S31 domain. Active-site charge relay system; for serine protease NS3 activity residues include histidine 1658 and aspartate 1695. The N-linked (GlcNAc...) asparagine; by host glycan is linked to asparagine 1713. Serine 1752 functions as the Charge relay system; for serine protease NS3 activity in the catalytic mechanism. The 159-residue stretch at isoleucine 1802–alanine 1960 folds into the Helicase ATP-binding domain. Leucine 1815 to threonine 1822 is a binding site for ATP. Residues aspartate 1910–histidine 1913 carry the DEAH box motif. The region spanning glycine 1978–asparagine 2143 is the Helicase C-terminal domain. 7 N-linked (GlcNAc...) asparagine; by host glycosylation sites follow: asparagine 2134, asparagine 2217, asparagine 2494, asparagine 2682, asparagine 2751, asparagine 2891, and asparagine 2988. 2 residues coordinate GTP: threonine 3499 and leucine 3501. A RdRp catalytic domain is found at proline 3518–phenylalanine 3641. N-linked (GlcNAc...) asparagine; by host glycosylation occurs at asparagine 3688. Residues arginine 3696 and lysine 3704 each coordinate GTP. Asparagine 3777 and asparagine 3793 each carry an N-linked (GlcNAc...) asparagine; by host glycan.

The protein belongs to the pestivirus polyprotein family. Homodimer; disulfide-linked. As to quaternary structure, homodimer; disulfide-linked. Heterodimer with E1; disulfide-linked. In terms of assembly, interacts with host IFIH1/MDA5; this interaction is involved in the inhibition of IFN-beta production. In terms of processing, heavily glycosylated. Post-translationally, the viral RNA of pestiviruses is expressed as a single polyprotein which undergoes post-translational proteolytic processing resulting in the production of at least eleven individual proteins. The N-terminal protease cleaves itself from the nascent polyprotein autocatalytically and thereby generates the N-terminus of the adjacent viral capsid protein C. Cleavage between E2 and p7 is partial.

Its subcellular location is the virion. It is found in the host membrane. The protein localises to the virion membrane. The protein resides in the host endoplasmic reticulum membrane. It localises to the host cytoplasm. The enzyme catalyses Leu is conserved at position P1 for all four cleavage sites. Alanine is found at position P1' of the NS4A-NS4B cleavage site, whereas serine is found at position P1' of the NS3-NS4A, NS4B-NS5A and NS5A-NS5B cleavage sites.. It catalyses the reaction RNA(n) + a ribonucleoside 5'-triphosphate = RNA(n+1) + diphosphate. The catalysed reaction is a ribonucleoside 5'-triphosphate + H2O = a ribonucleoside 5'-diphosphate + phosphate + H(+). It carries out the reaction ATP + H2O = ADP + phosphate + H(+). The enzyme catalyses a ribonucleotidyl-ribonucleotide-RNA + H2O = a 3'-end 3'-phospho-ribonucleotide-RNA + a 5'-end dephospho-ribonucleoside-RNA + H(+). It catalyses the reaction a ribonucleotidyl-ribonucleotide-RNA = a 3'-end 2',3'-cyclophospho-ribonucleotide-RNA + a 5'-end dephospho-ribonucleoside-RNA. The catalysed reaction is a 3'-end 2',3'-cyclophospho-ribonucleotide-RNA + H2O = a 3'-end 3'-phospho-ribonucleotide-RNA + H(+). Its activity is regulated as follows. Inhibited by Zn(2+), which binds the catalytic site. Leader cysteine autoprotease that cleaves itself from the nascent polyprotein during translation of the viral mRNA. Once released, plays a role in the inhibition of host innate immune response by interacting with host IRF3 and inducing its proteasomal degradation. Its function is as follows. Packages viral RNA to form a viral nucleocapsid and thereby protects viral RNA. Also plays a role in transcription regulation. Protects the incoming virus against IFN-induced effectors. Functionally, initial binding to target cell probably involves interaction of E(rns) with glycosaminoglycans. Also possesses intrinsic ribonuclease (RNase) activity that can inhibit the production of type I interferon and assist in the development of persistent infections. In terms of biological role, E1 and/or E2 are probably responsible of cell attachment with CD46 and subsequent fusion after internalization of the virion by endocytosis. E1 and/or E2 are probably responsible of cell attachment with CD46 and subsequent fusion after internalization of the virion by endocytosis. Probably functions as a coeffector of fusion providing structural integrity to the fusion complex and possibly controlling exposure of the fusion motif in E1. Its function is as follows. Plays an essential role in the virus replication cycle by acting as a viroporin. Forms ion conductive pores, which alters the cell permeability allowing the transport of ions and other small molecules. Forms a leader sequence to properly orient NS2 in the membrane. Functionally, uncleaved NS2-3 is required for production of infectious virus. In terms of biological role, plays a role in the regulation of viral RNA replication. Multifunctional protein that contains an N-terminal protease and a C-terminal helicase, playing essential roles in viral polyprotein processing and viral genome replication. The chymotrypsin-like serine protease activity utilizes NS4A as an essential cofactor and catalyzes the cleavage of the polyprotein leading to the release of NS4A, NS4B, NS5A, and NS5B. Interacts with NS5B to enhance RNA-dependent RNA polymerase activity. Its function is as follows. Acts as a cofactor for the NS3 protease activity. Functionally, induces a specific membrane alteration that serves as a scaffold for the virus replication complex. Plays a role in the inhibition of host innate immune response by inhibiting RIGI/IFIH1-mediated IFN-beta production. In terms of biological role, replicates the viral (+) and (-) genome. Initiates the primer-independent RNA replication via a de novo mechanism requiring GTP. The chain is Genome polyprotein from Bos taurus (Bovine).